We begin with the raw amino-acid sequence, 296 residues long: 4-hydroxybenzoate octaprenyltransferase (296 aa).

8 helical membrane-spanning segments follow: residues 28-48 (PIGI…AAEG), 52-72 (LSHV…GCAI), 102-122 (ALIL…CTNA), 146-166 (YYPQ…TFTA), 169-189 (GELP…TVGY), 219-239 (VIIL…GARF), 241-261 (LGGW…WEFW), and 275-295 (FLHN…DYAL).

This sequence belongs to the UbiA prenyltransferase family. Requires Mg(2+) as cofactor.

The protein localises to the cell inner membrane. It carries out the reaction all-trans-octaprenyl diphosphate + 4-hydroxybenzoate = 4-hydroxy-3-(all-trans-octaprenyl)benzoate + diphosphate. The protein operates within cofactor biosynthesis; ubiquinone biosynthesis. Functionally, catalyzes the prenylation of para-hydroxybenzoate (PHB) with an all-trans polyprenyl group. Mediates the second step in the final reaction sequence of ubiquinone-8 (UQ-8) biosynthesis, which is the condensation of the polyisoprenoid side chain with PHB, generating the first membrane-bound Q intermediate 3-octaprenyl-4-hydroxybenzoate. This Pseudomonas fluorescens (strain ATCC BAA-477 / NRRL B-23932 / Pf-5) protein is 4-hydroxybenzoate octaprenyltransferase.